The chain runs to 210 residues: Syntaxin-binding protein 6 (210 aa).

Ser2 is modified (N-acetylserine). One can recognise a v-SNARE coiled-coil homology domain in the interval 151-210 (GNSILHSAADSVTSAVQKASQALNERGERLGRAEEKTEDMKNSAQQFAETAHKLAMKHKC).

Part of a ternary complex containing SNAP25 and STX1A that can be dissociated by NAPA and NSF. Interacts with STX4A.

It is found in the cytoplasm. It localises to the membrane. In terms of biological role, forms non-fusogenic complexes with SNAP25 and STX1A and may thereby modulate the formation of functional SNARE complexes and exocytosis. In Mus musculus (Mouse), this protein is Syntaxin-binding protein 6 (Stxbp6).